The following is a 614-amino-acid chain: MQNYPLLSLINSPEDLRLLSKEQLPQICQELRAYLLESVSQSSGHLASGLGTVELTVALHYVYKTPFDQLIWDVGHQAYPHKILTGRRDQMSTIRQKNGIHPFPWREESEFDVLSVGHSSTSISAGLGIAVAAQRENAGRKTVCVIGDGAITAGMAFEAMNHAGALHTDMLVILNDNEMSISENVGALNNHLARLLTGSFYSSIREGGKKILSGMPPIKEFVKKTEEHVKGFVSPVGTMFEQLGFNYIGPIDGHNIEELISTLKNMRALKGPQFLHIMTKKGKGYAPAEKDPIGFHGVPKFDHLSGQLPKSNTTPTYSKIFGDWLCEMAENDPKLIGITPAMREGSGMVEFSNRFPQQYFDVAIAEQHAVTFAAGLAIGGYKPVVAIYSTFLQRAYDQVIHDVAIQNLPVLFAIDRAGVVGADGQTHQGAFDISFLRCIPNMVIMTPSDENECRQMLYTGYKLNQPAAVRYPRGNAIGVELTPLTMLALGKSNLIREGEKIAILNFGTLLPTAINVAEKLNATVIDMRFVKPIDVERIHQIAQTHDLIVTLEENVIQGGAGSAVAEVLHSQQHQTKLLQLGLPDFFIPQGTQQEILADLHLDEAGIETQIKNFL.

Thiamine diphosphate is bound by residues His-76 and 117-119 (GHS). Mg(2+) is bound at residue Asp-148. Thiamine diphosphate-binding positions include 149–150 (GA), Asn-177, Tyr-285, and Glu-366. Asn-177 provides a ligand contact to Mg(2+).

The protein belongs to the transketolase family. DXPS subfamily. Homodimer. It depends on Mg(2+) as a cofactor. Thiamine diphosphate is required as a cofactor.

It carries out the reaction D-glyceraldehyde 3-phosphate + pyruvate + H(+) = 1-deoxy-D-xylulose 5-phosphate + CO2. It functions in the pathway metabolic intermediate biosynthesis; 1-deoxy-D-xylulose 5-phosphate biosynthesis; 1-deoxy-D-xylulose 5-phosphate from D-glyceraldehyde 3-phosphate and pyruvate: step 1/1. In terms of biological role, catalyzes the acyloin condensation reaction between C atoms 2 and 3 of pyruvate and glyceraldehyde 3-phosphate to yield 1-deoxy-D-xylulose-5-phosphate (DXP). The chain is 1-deoxy-D-xylulose-5-phosphate synthase from Pasteurella multocida (strain Pm70).